The chain runs to 99 residues: UPF0045 protein MTH_1187 (99 aa).

This sequence belongs to the UPF0045 family. Homotetramer.

This is UPF0045 protein MTH_1187 from Methanothermobacter thermautotrophicus (strain ATCC 29096 / DSM 1053 / JCM 10044 / NBRC 100330 / Delta H) (Methanobacterium thermoautotrophicum).